Reading from the N-terminus, the 138-residue chain is uncharacterized protein (138 aa).

The H-T-H motif DNA-binding region spans 17–38 (LCRNDVAHEAGTNNVQIMRIEK).

This is an uncharacterized protein from Herpetosiphon aurantiacus (Herpetosiphon giganteus).